Reading from the N-terminus, the 1610-residue chain is E3 ubiquitin-protein ligase listerin (1610 aa).

Over residues 1–10 (MKKKSTDLYG) the composition is skewed to basic and acidic residues. The interval 1 to 20 (MKKKSTDLYGRKNPGMQSMS) is disordered. HEAT repeat units follow at residues 110-148 (LKIF…SDRA), 314-351 (VPML…NLIT), 372-408 (IGAM…EVYD), 409-443 (CLLN…RYFK), 590-626 (SPAF…SFDE), 627-664 (LENI…TAVF), 736-773 (KSLY…KALE), 965-1003 (GKMP…VVSN), 1119-1156 (CCFL…MSVV), 1322-1354 (RVYL…HAMD), 1355-1393 (LLRP…YSSA), and 1435-1473 (FTGY…KVNR). Residues 1558–1604 (CAICYSVLSVERTLPNKRCGTCRHKFHASCLYKWFKSSNSSRCPLCR) form an RING-type; atypical zinc finger.

It belongs to the LTN1 family. As to quaternary structure, component of the ribosome quality control complex (RQC), composed of the E3 ubiquitin ligase rkr1/ltn1, rqc1 and mtr1/rqc2, as well as cdc48 and its ubiquitin-binding cofactors. RQC forms a stable complex with 60S ribosomal subunits.

Its subcellular location is the nucleus. The protein resides in the cytoplasm. The protein localises to the cytosol. It carries out the reaction S-ubiquitinyl-[E2 ubiquitin-conjugating enzyme]-L-cysteine + [acceptor protein]-L-lysine = [E2 ubiquitin-conjugating enzyme]-L-cysteine + N(6)-ubiquitinyl-[acceptor protein]-L-lysine.. The protein operates within protein modification; protein ubiquitination. Functionally, E3 ubiquitin-protein ligase component of the ribosome quality control complex (RQC), a ribosome-associated complex that mediates ubiquitination and extraction of incompletely synthesized nascent chains for proteasomal degradation. Mediates ubiquitination of proteins derived from mRNAs lacking stop codons (non-stop proteins) and other translation arrest products induced by poly-lysine sequences and tandem rare codons. Ubiquitination leads to cdc48 recruitment for extraction and degradation of the incomplete translation product. May indirectly play a role in chromatin function and transcription. The sequence is that of E3 ubiquitin-protein ligase listerin from Schizosaccharomyces pombe (strain 972 / ATCC 24843) (Fission yeast).